Consider the following 284-residue polypeptide: MVQIIDGKALAQKMQAALAKKVESLKAEKGIVPGLVVILVGDNPASQVYVRNKERAALAAGFKSETVRLSDSVCQEELIELIEQYNQDDTIHGILVQLPLPHHINDKSIILAIDPKKDVDGFHPMNTGHLWSGRPNMVPCTPAGIMEMFHDYGIELEGKNAVIVGRSNIVGKPMAQLLLDKNATVTLTHSRTRRLADICRRADILIVAIGQGHFITKEFVKEGAVVIDVGMNRDVNGRLIGDVAFDEVSELASMITPVPGGVGPMTITMLLEQTYQAALRRVSQ.

NADP(+) is bound by residues 165 to 167 (GRS) and S190.

This sequence belongs to the tetrahydrofolate dehydrogenase/cyclohydrolase family. As to quaternary structure, homodimer.

The catalysed reaction is (6R)-5,10-methylene-5,6,7,8-tetrahydrofolate + NADP(+) = (6R)-5,10-methenyltetrahydrofolate + NADPH. The enzyme catalyses (6R)-5,10-methenyltetrahydrofolate + H2O = (6R)-10-formyltetrahydrofolate + H(+). It participates in one-carbon metabolism; tetrahydrofolate interconversion. In terms of biological role, catalyzes the oxidation of 5,10-methylenetetrahydrofolate to 5,10-methenyltetrahydrofolate and then the hydrolysis of 5,10-methenyltetrahydrofolate to 10-formyltetrahydrofolate. The protein is Bifunctional protein FolD of Streptococcus equi subsp. equi (strain 4047).